We begin with the raw amino-acid sequence, 129 residues long: F(420)H(2) dehydrogenase subunit A (129 aa).

The next 3 membrane-spanning stretches (helical) occupy residues Ile-9–Met-29, Phe-64–Phe-84, and His-95–Gly-115.

This sequence belongs to the complex I subunit 3 family. As to quaternary structure, the FPO complex is composed of at least 13 different subunits. FpoA, FpoH, FpoJ, FpoK, FpoL, FpoM and FpoN proteins constitute the membrane sector of the complex.

Its subcellular location is the cell membrane. It carries out the reaction methanophenazine + reduced coenzyme F420-(gamma-L-Glu)(n) = dihydromethanophenazine + oxidized coenzyme F420-(gamma-L-Glu)(n) + H(+). Its function is as follows. Component of the F(420)H(2) dehydrogenase (FPO complex) which is part of the energy-conserving F(420)H(2):heterodisulfide oxidoreductase system. The membrane-bound electron transfer system of the complex plays an important role in the metabolism of methylotrophic methanogens when the organisms grow on methanol or methylamines. Catalyzes the oxidation of methanophenazine to dihydromethanophenazine. It shuttles electrons from F(420)H(2), via FAD and iron-sulfur (Fe-S) centers, to methanophenazine (an electron carrier in the membrane). It couples the redox reaction to proton translocation (for every two electrons transferred, two hydrogen ions are translocated across the cytoplasmic membrane), and thus conserves the redox energy in a proton gradient. It also catalyzes the oxidation of F(420)H(2) with quinones such as 2,3-dimethyl-1,4-naphthoquinone, 2-methyl-1,4-naphthoquinone and tetramethyl-p-benzoquinone. This chain is F(420)H(2) dehydrogenase subunit A (fpoA), found in Methanosarcina mazei (strain ATCC BAA-159 / DSM 3647 / Goe1 / Go1 / JCM 11833 / OCM 88) (Methanosarcina frisia).